Reading from the N-terminus, the 437-residue chain is 2-methylisoborneol synthase (437 aa).

Positions 32 to 125 are disordered; that stretch reads AHDSEATVGG…IPGLYHHPVP (94 aa). Positions 59–73 are enriched in pro residues; that stretch reads PPSPAAPPTDVPAPE. Mg(2+) contacts are provided by aspartate 194, aspartate 195, glutamate 199, asparagine 342, serine 346, and glutamate 350.

The protein belongs to the terpene synthase family. 2-methylisoborneol synthase subfamily. Mg(2+) serves as cofactor.

It carries out the reaction (E)-2-methylgeranyl diphosphate + H2O = 2-methylisoborneol + diphosphate. Catalyzes the cyclization of 2-methylgeranyl diphosphate (2-MeGPP) to 2-methylisoborneol (2-MIB), which likely involves the intermediacy of 2-methyllinalyl diphosphate. This is 2-methylisoborneol synthase from Streptomyces griseus.